Reading from the N-terminus, the 160-residue chain is Transcription elongation factor GreA (160 aa).

The stretch at 1–31 (MAEKTYPMTLEEKEKLEKELEELKLVRRPEI) forms a coiled coil.

Belongs to the GreA/GreB family.

Functionally, necessary for efficient RNA polymerase transcription elongation past template-encoded arresting sites. The arresting sites in DNA have the property of trapping a certain fraction of elongating RNA polymerases that pass through, resulting in locked ternary complexes. Cleavage of the nascent transcript by cleavage factors such as GreA or GreB allows the resumption of elongation from the new 3'terminus. GreA releases sequences of 2 to 3 nucleotides. This chain is Transcription elongation factor GreA, found in Streptococcus suis (strain 98HAH33).